Consider the following 514-residue polypeptide: CUGBP Elav-like family member 2 (514 aa).

RRM domains lie at 44 to 127 (IKMF…PADS), 136 to 216 (RKLF…FADT), and 429 to 507 (ANLF…LKRS).

This sequence belongs to the CELF/BRUNOL family.

It localises to the nucleus. It is found in the cytoplasm. In terms of biological role, RNA-binding protein implicated in the regulation of several post-transcriptional events. May be involved in pre-mRNA alternative splicing, mRNA translation repression and stability. This Danio rerio (Zebrafish) protein is CUGBP Elav-like family member 2 (celf2).